A 414-amino-acid polypeptide reads, in one-letter code: Poly(3-hydroxyalkanoate) depolymerase C (414 aa).

The signal sequence occupies residues 1–37; it reads MLAKQIKKANSRSTLLRKSLLFAAPIILAVSSSSVYA. Catalysis depends on Ser-154, which acts as the Charge relay system.

This sequence belongs to the AB hydrolase superfamily. Lipase family.

Its subcellular location is the secreted. Its function is as follows. Specific for poly(hydroxyalkanoic acid) consisting of monomers of four or five carbon atoms and for P-nitrophenylbutyrate as substrates. In Paucimonas lemoignei (Pseudomonas lemoignei), this protein is Poly(3-hydroxyalkanoate) depolymerase C (phaZ1).